The chain runs to 138 residues: uncharacterized protein (138 aa).

The 125-residue stretch at 9–133 (EDEWKKELGP…NSASLEFHNE (125 aa)) folds into the MsrB domain. The Zn(2+) site is built by Cys-49, Cys-52, Cys-97, and Cys-100. Cys-122 serves as the catalytic Nucleophile.

The protein belongs to the MsrB Met sulfoxide reductase family. Zn(2+) serves as cofactor.

It localises to the cytoplasm. It is found in the nucleus. This is an uncharacterized protein from Schizosaccharomyces pombe (strain 972 / ATCC 24843) (Fission yeast).